We begin with the raw amino-acid sequence, 337 residues long: tRNA N6-adenosine threonylcarbamoyltransferase (337 aa).

Positions 110 and 114 each coordinate Fe cation. Substrate-binding positions include 133–137 (LVSGK), Asp-166, Gly-179, and Asn-271. Fe cation is bound at residue Asp-300.

The protein belongs to the KAE1 / TsaD family. Fe(2+) serves as cofactor.

Its subcellular location is the cytoplasm. The catalysed reaction is L-threonylcarbamoyladenylate + adenosine(37) in tRNA = N(6)-L-threonylcarbamoyladenosine(37) in tRNA + AMP + H(+). Its function is as follows. Required for the formation of a threonylcarbamoyl group on adenosine at position 37 (t(6)A37) in tRNAs that read codons beginning with adenine. Is involved in the transfer of the threonylcarbamoyl moiety of threonylcarbamoyl-AMP (TC-AMP) to the N6 group of A37, together with TsaE and TsaB. TsaD likely plays a direct catalytic role in this reaction. This chain is tRNA N6-adenosine threonylcarbamoyltransferase, found in Buchnera aphidicola subsp. Schizaphis graminum (strain Sg).